The following is a 360-amino-acid chain: Variable large protein 18 (360 aa).

The first 26 residues, 1–26 (MRKRISAIINKLNISIMMMIVVLMIG), serve as a signal peptide directing secretion. The N-palmitoyl cysteine moiety is linked to residue Cys27. Cys27 carries S-diacylglycerol cysteine lipidation.

Belongs to the variable large protein (Vlp) family. Alpha subfamily.

The protein resides in the cell outer membrane. The Vlp and Vsp proteins are antigenically distinct proteins, only one vlp or vsp gene is transcriptionally active at any one time. Switching between these genes is a mechanism of host immune response evasion. The sequence is that of Variable large protein 18 from Borrelia hermsii.